Reading from the N-terminus, the 1264-residue chain is MVLYKRKPILLPDPKPLPLDLNVQVWHIEETGEWFSSYEEFLERFDFYTRHHFTCEITGTSCLTFFQALDSEETQFKYVEDRFPLKLREPVARFLHFNGIRRLDALVEKVYARFKNDFFPGEVVYLRKQKDSSTTSSNSQQSTPQPDDMVEINSVGNPGLPQYQYQRRYVIKEKVQFNATINPESREIVMPAHTKYMLIEEAASSNKSFIVDQGQIYRDRSTFTKHLIKCFFKITLQRASSKMGAPWCVKPEYLAMYGLTMEWPKDMLKYKEDEPVVARRSNSANVSSPESEKNKRQSKSSGKSNTSNDASNKKETKKKRKPTEVNDSENNSSEEDKKKGQNVTSETHSKKRKKEANEEPNTENVESVPTPANAEPQAVTITSIMDDLALPYQHPPNIFPNLTYYNEKLECISLGSTKLSRPFDSFGKLLQAYQFLNTFGSKICLSHFSLDQFITSLKCTDPYELKGEVVLVNIRTQTSKEQEIENNGLPMKNKAETTTEEDSENPSDWQRNSFIRDMIMKRNSDKVEYKIVHDDPASDDILDNINHNGSALLIEVFTALLRLFINEEGDWSCIVVENWIIDDKGVLMERKDERGEGEAKQKRNAHGYFLQDKEKIDNLKDTLKENATEVQKESDAKNETNSESDSKSDSDSEERDPKLEKCLNYRNVNWIERLTKRQFNNSYWLIILLGVLEDCRHLPMYTEFIDSFIEKIIPKDISATQLPKQLWRNFCRKLSFSDKVNALWILVDLVSHFSPDIKAAVDDSMELCGQIRSERFKVARELKTEAAVLSNLQGDLQAIQEKLNKTDENTPSADGADKKDDSESNSEPIDLIIIEKKQKLIEEQDKKVQALQSDKNFLDNCLFENDLQRLKPLGLDRYGNRYFWLDHNGVPFPQYPAGMNETPKSNNSLSYHSGRLLIQGPKASSAKFFLNVSDEQLSNWQKIRNSEGISEATREVFGISKTSSGSYNYVENGIEVELLDSNDRVNPLIELTPIQKKIMDETPSRLLLSPDQWYCIDKLEDLSRIMDWLDNWGRKEHDLLRQIRPIMERIKSSLSLRDHALSLTAFTKNEEKLLKELENNEFTENELNVDSMDVDDKNSGVKSEVDVQVDAEEKREAVIDEKLEVIADELMKLDDSSKTRNVLNRIQELEDQRDELLEQKKSIINSQRPGARILARSERKRTKISRGNKVNKQIEILTDLVNYRHFKAMEDVIAWKNVLANSIWGSSLRKNASGNKRSGVIETVDDKLKDIVGQTSRTVTPAPN.

The WAC domain occupies 23–130 (VQVWHIEETG…GEVVYLRKQK (108 aa)). 5 disordered regions span residues 130–153 (KDSS…VEIN), 275–374 (PVVA…PANA), 482–508 (QEIE…NPSD), 627–655 (ATEV…SEER), and 803–825 (LNKT…SESN). Over residues 132–147 (SSTTSSNSQQSTPQPD) the composition is skewed to low complexity. Polar residues-rich tracts occupy residues 280-289 (RSNSANVSSP) and 299-310 (KSSGKSNTSNDA). The DDT domain occupies 423–483 (FDSFGKLLQA…IRTQTSKEQE (61 aa)).

In terms of assembly, component of the ISW2 complex, which at least consists of ISW2, ITC1, DLS1 and DPB4. May form a stable subcomplex with ISW2.

The protein localises to the nucleus. Its function is as follows. Functions as a component of the ISW2 complex, which acts in remodeling the chromatin by catalyzing an ATP-dependent alteration in the structure of nucleosomal DNA. The ISW2 complex is involved in coordinating transcriptional repression and in inheritance of telomeric silencing. It is involved in repression of MAT a-specific genes, INO1, and early meiotic genes during mitotic growth dependent upon transcription factor UME6 and in a parallel pathway to the RPD3-SIN3 histone deacetylase complex. ITC1 is required for nucleosome-stimulated ATPase activity and chromatin-remodeling activity of the complex. Required for the repression of MATa a-specific genes. This chain is Imitation switch two complex protein 1 (ITC1), found in Saccharomyces cerevisiae (strain ATCC 204508 / S288c) (Baker's yeast).